A 346-amino-acid polypeptide reads, in one-letter code: Protein FAF1 (346 aa).

Disordered stretches follow at residues 22 to 120 (QFGS…LRSG) and 323 to 346 (KRDIARISGGERSGKFNGKKKSRR). Over residues 31–65 (FEDKTKNIRTEVDTRDSSGDEIDNSDHGSDFKDGT) the composition is skewed to basic and acidic residues. The segment covering 72 to 85 (SDEDSGNETAEENN) has biased composition (acidic residues).

In terms of assembly, interacts with KRR1.

It is found in the nucleus. The protein resides in the nucleolus. Required for pre-rRNA processing and 40S ribosomal subunit assembly. Seems to act in the processing of 35S rRNA at the A(0), A(1), and A(2) cleavage sites. This is Protein FAF1 (FAF1) from Saccharomyces cerevisiae (strain ATCC 204508 / S288c) (Baker's yeast).